A 270-amino-acid polypeptide reads, in one-letter code: Esterase (270 aa).

Catalysis depends on charge relay system residues Ser127, Asp216, and His244.

It belongs to the LovG family.

It functions in the pathway mycotoxin biosynthesis. Functionally, esterase; part of the gene cluster that mediates the biosynthesis of the selective antifungal agent ascochitine, an o-quinone methide that plays a possible protective role against other microbial competitors in nature and is considered to be important for pathogenicity of legume-associated Didymella species. The pathway probably begins with the synthesis of a keto-aldehyde intermediate by the ascochitine non-reducing polyketide synthase pksAC from successive condensations of 4 malonyl-CoA units, presumably with a simple acetyl-CoA starter unit. Release of the keto-aldehyde intermediate is consistent with the presence of the C-terminal reductive release domain. The HR-PKS (orf7) probably makes a diketide starter unit which is passed to the non-reducing polyketide synthase pksAC for further extension, producing ascochital and ascochitine. The aldehyde dehydrogenase (orf1), the 2-oxoglutarate-dependent dioxygenase (orf3) and the dehydrogenase (orf9) are probably involved in subsequent oxidations of methyl groups to the carboxylic acid of the heterocyclic ring. The ascochitine gene cluster also includes a gene encoding a short peptide with a cupin domain (orf2) that is often found in secondary metabolite gene clusters and which function has still to be determined. The protein is Esterase of Didymella fabae (Leaf and pod spot disease fungus).